Reading from the N-terminus, the 595-residue chain is Sorting nexin-9 (595 aa).

Residues 1–62 form the SH3 domain; it reads MATKARVMYD…PTDYVEILPN (62 aa). Low complexity predominate over residues 89-100; it reads QTNSSSANSNNQ. The disordered stretch occupies residues 89 to 199; sequence QTNSSSANSN…QRGNSRAGAS (111 aa). At serine 121 the chain carries Phosphoserine. The segment covering 129–144 has biased composition (polar residues); the sequence is TDGTSAQRNSSANNWD. The segment covering 159 to 169 has biased composition (acidic residues); it reads GDDDEWDEDWD. Phosphoserine is present on serine 200. Residues 201-213 are critical for tubulation activity; the sequence is MKLPLNKFPGFAK. Tyrosine 239 bears the Phosphotyrosine mark. Residues 250-360 enclose the PX domain; that stretch reads FDCVVADPRK…QQFLNFRDEK (111 aa). Positions 286, 288, and 327 each coordinate a 1,2-diacyl-sn-glycero-3-phospho-(1D-myo-inositol-4,5-bisphosphate). Lysine 288 is subject to N6-acetyllysine. The region spanning 392–595 is the BAR domain; the sequence is LIEIEQKCDA…RQALSRFPVM (204 aa).

This sequence belongs to the sorting nexin family. In terms of assembly, homodimer, and homooligomer. Heterodimer with SNX18. Interacts with ITCH. Interacts (via SH3 domain) with TNK2, WASL and ACTR3. Identified in a complex with TNK2 and clathrin heavy chains. Identified in a complex with the AP-2 complex, clathrin and DNM2. Interacts (via SH3 domain) with DNM1 and DNM2. Identified in an oligomeric complex containing DNM1 and SNX9. Interacts with FCHSD1. Interacts with ADAM9 and ADAM15 cytoplasmic tails. Phosphorylated on tyrosine residues by TNK2. Phosphorylation promotes its activity in the degradation of EGFR. Post-translationally, ubiquitinated by ITCH. As to expression, detected in inner ear vestibula and in the cuticular plate of cochlear hair cells (at protein level).

It localises to the cytoplasmic vesicle membrane. Its subcellular location is the cell membrane. The protein resides in the cytoplasmic vesicle. It is found in the clathrin-coated vesicle. The protein localises to the golgi apparatus. It localises to the trans-Golgi network. Its subcellular location is the cell projection. The protein resides in the ruffle. It is found in the cytoplasm. Involved in endocytosis and intracellular vesicle trafficking, both during interphase and at the end of mitosis. Required for efficient progress through mitosis and cytokinesis. Required for normal formation of the cleavage furrow at the end of mitosis. Plays a role in endocytosis via clathrin-coated pits, but also clathrin-independent, actin-dependent fluid-phase endocytosis. Plays a role in macropinocytosis. Promotes internalization of TNFR. Promotes degradation of EGFR after EGF signaling. Stimulates the GTPase activity of DNM1. Promotes DNM1 oligomerization. Promotes activation of the Arp2/3 complex by WASL, and thereby plays a role in the reorganization of the F-actin cytoskeleton. Binds to membranes enriched in phosphatidylinositol 4,5-bisphosphate and promotes membrane tubulation. Has lower affinity for membranes enriched in phosphatidylinositol 3-phosphate. The chain is Sorting nexin-9 (Snx9) from Mus musculus (Mouse).